The sequence spans 331 residues: UDP-galactose/UDP-glucose transporter 3 (331 aa).

Transmembrane regions (helical) follow at residues 11–31 (VLLL…QGIL), 49–69 (HLAF…YIMI), 80–100 (APWW…AMGI), 112–132 (VLAK…VYGI), 135–155 (TLPE…FALL), 170–190 (APLG…TNAT), 206–226 (IMLG…FGLP), and 245–265 (WDIL…FLTI). The Di-lysine motif motif lies at 327–331 (KKKKA).

This sequence belongs to the nucleotide-sugar transporter family. UDP-galactose:UMP antiporter (TC 2.A.7.11) subfamily. In terms of tissue distribution, mostly expressed in flowers, and, to a lower extent, in roots, stems and leaves.

The protein localises to the endoplasmic reticulum membrane. The protein resides in the golgi apparatus membrane. In terms of biological role, essential sugar transporter required for the transport of UDP-glucose from the cytoplasm into the Golgi and the endoplasmic reticulum. Essential for pollen development and involved in embryo sac progress. This chain is UDP-galactose/UDP-glucose transporter 3, found in Arabidopsis thaliana (Mouse-ear cress).